We begin with the raw amino-acid sequence, 417 residues long: Serine hydroxymethyltransferase (417 aa).

Residues Leu-112 and 116–118 (GHL) each bind (6S)-5,6,7,8-tetrahydrofolate. An N6-(pyridoxal phosphate)lysine modification is found at Lys-221. Residue Glu-247 coordinates (6S)-5,6,7,8-tetrahydrofolate.

The protein belongs to the SHMT family. In terms of assembly, homodimer. It depends on pyridoxal 5'-phosphate as a cofactor.

The protein resides in the cytoplasm. The enzyme catalyses (6R)-5,10-methylene-5,6,7,8-tetrahydrofolate + glycine + H2O = (6S)-5,6,7,8-tetrahydrofolate + L-serine. Its pathway is one-carbon metabolism; tetrahydrofolate interconversion. The protein operates within amino-acid biosynthesis; glycine biosynthesis; glycine from L-serine: step 1/1. In terms of biological role, catalyzes the reversible interconversion of serine and glycine with tetrahydrofolate (THF) serving as the one-carbon carrier. This reaction serves as the major source of one-carbon groups required for the biosynthesis of purines, thymidylate, methionine, and other important biomolecules. Also exhibits THF-independent aldolase activity toward beta-hydroxyamino acids, producing glycine and aldehydes, via a retro-aldol mechanism. In Borrelia garinii subsp. bavariensis (strain ATCC BAA-2496 / DSM 23469 / PBi) (Borreliella bavariensis), this protein is Serine hydroxymethyltransferase.